Reading from the N-terminus, the 485-residue chain is PSSAFNSPFCTTNSGAPVFNNNSSLTVGARGPVLLEDYHLVEKLANFDRERVPERVVHARGASAKGFFEVTHDITHLTCADFLRAPGVQTPVIVRFSTVIHERGSPETLRDPRGFAVKFYTREGNFDLVGNNFPVFFIRDGMKFPDMVHALKPNPKSHIQENWRVLDFFSHVPESLHMFTFLFDDIGIPQDYRHMDGSGVHTFTLINKAGKSTYVKFHWKPTCGVKSLLEDEAARVGGANHSHATQDLYDSIAAGNYPEWKLFIQTMDPDHEDRFDFDPLDVTKTWPEDILPLQPVGRLVLNKNIDNFSNENEQLAFCPSIVVPGVYYSDDKMLQTRIFSYSDTQRYRLGPNYLQLPANAPKCAHHNNHYDGSMNFMHRDEEIDYFPSRYDPVRHAEKYPIPSTMCTGKREKCVIQKENNFKQPGERYRSFTPDRQERFIRRWVETLSDPRITYEIRSIWISYWSQADKSLGQKLASRLNVRPSI.

Active-site residues include His-58 and Asn-131. Tyr-341 serves as a coordination point for heme.

This sequence belongs to the catalase family. Homotetramer. Requires heme as cofactor.

The protein resides in the peroxisome. The catalysed reaction is 2 H2O2 = O2 + 2 H2O. Its function is as follows. Occurs in almost all aerobically respiring organisms and serves to protect cells from the toxic effects of hydrogen peroxide. This is Catalase isozyme 1 (CAT1) from Nicotiana plumbaginifolia (Leadwort-leaved tobacco).